Consider the following 133-residue polypeptide: Secretin (133 aa).

The N-terminal stretch at 1-22 (MEPPLPTPMLLLLLLLLSSSAA) is a signal peptide. A propeptide spanning residues 23 to 30 (LPAPPRTP) is cleaved from the precursor. Position 58 is a valine amide (Val58). Ser62 is modified (phosphoserine). Positions 62 to 133 (SEQDTENIPE…EWTETTRPPR (72 aa)) are excised as a propeptide.

This sequence belongs to the glucagon family. Highly expressed in the intestine. Also expressed in the hippocampus, cerebellum and the brain stem in adult mouse brain. In the hippocampus, expressed in the dentate gyrus, the hilus and the molecular layer.

The protein localises to the secreted. Hormone involved in different processes, such as regulation of the pH of the duodenal content, food intake and water homeostasis. Exerts its biological effects by binding to secretin receptor (SCTR), a G-protein coupled receptor expressed in the basolateral domain of several cells. Acts as a key gastrointestinal hormone by regulating the pH of the duodenal content. Secreted by S cells of the duodenum in the crypts of Lieberkuehn and regulates the pH of the duodenum by (1) inhibiting the secretion of gastric acid from the parietal cells of the stomach and (2) stimulating the production of bicarbonate (NaHCO(3)) from the ductal cells of the pancreas. Production of bicarbonate is essential to neutralize the pH and ensure no damage is done to the small intestine by the gastric acid. In addition to regulating the pH of the duodenal content, plays a central role in diet induced thermogenesis: acts as a non-sympathetic brown fat (BAT) activator mediating prandial thermogenesis, which consequentially induces satiation. Mechanistically, secretin released by the gut after a meal binds to secretin receptor (SCTR) in brown adipocytes, activating brown fat thermogenesis by stimulating lipolysis, which is sensed in the brain and promotes satiation. Also able to stimulate lipolysis in white adipocytes. Also plays an important role in cellular osmoregulation: released into the systemic circulation in response to hyperosmolality and acts at different levels in the hypothalamus, pituitary and kidney to regulate water homeostasis. Also plays a role in the central nervous system, possibly by acting as a neuropeptide hormone: required for hippocampal synaptic function and neural progenitor cells maintenance. This Mus musculus (Mouse) protein is Secretin.